A 61-amino-acid chain; its full sequence is Small ribosomal subunit protein uS14 (61 aa).

Zn(2+)-binding residues include C24, C27, C40, and C43.

The protein belongs to the universal ribosomal protein uS14 family. Zinc-binding uS14 subfamily. Part of the 30S ribosomal subunit. Contacts proteins S3 and S10. The cofactor is Zn(2+).

Binds 16S rRNA, required for the assembly of 30S particles and may also be responsible for determining the conformation of the 16S rRNA at the A site. The sequence is that of Small ribosomal subunit protein uS14 from Caldanaerobacter subterraneus subsp. tengcongensis (strain DSM 15242 / JCM 11007 / NBRC 100824 / MB4) (Thermoanaerobacter tengcongensis).